Consider the following 438-residue polypeptide: Adenosylhomocysteinase (438 aa).

3 residues coordinate substrate: T61, D137, and E162. 163–165 (TTT) contributes to the NAD(+) binding site. Positions 192 and 196 each coordinate substrate. NAD(+)-binding positions include N197, 226 to 231 (GYGDVG), E249, N284, 305 to 307 (IGH), and N352.

The protein belongs to the adenosylhomocysteinase family. Requires NAD(+) as cofactor.

The protein resides in the cytoplasm. It carries out the reaction S-adenosyl-L-homocysteine + H2O = L-homocysteine + adenosine. It participates in amino-acid biosynthesis; L-homocysteine biosynthesis; L-homocysteine from S-adenosyl-L-homocysteine: step 1/1. May play a key role in the regulation of the intracellular concentration of adenosylhomocysteine. This Flavobacterium johnsoniae (strain ATCC 17061 / DSM 2064 / JCM 8514 / BCRC 14874 / CCUG 350202 / NBRC 14942 / NCIMB 11054 / UW101) (Cytophaga johnsonae) protein is Adenosylhomocysteinase.